A 61-amino-acid chain; its full sequence is Temporin-MT3 (61 aa).

The first 22 residues, 1 to 22, serve as a signal peptide directing secretion; the sequence is MFTLKKPLLLLFFLGTINLSLC. The propeptide at 23–44 is removed in mature form; sequence EQERNAEEERRDEPDERNAEVE. The residue at position 59 (Leu-59) is a Leucine amide.

This sequence belongs to the frog skin active peptide (FSAP) family. Temporin subfamily. Expressed by the skin glands.

It is found in the secreted. In terms of biological role, antimicrobial peptide. In Amolops mantzorum (Sichuan torrent frog), this protein is Temporin-MT3.